A 154-amino-acid polypeptide reads, in one-letter code: uncharacterized protein (154 aa).

Residue 12 to 19 participates in GTP binding; the sequence is GSSDVGKT. Residues 17 to 112 enclose the G domain; it reads GKTTLMENLI…KIPYGIFINK (96 aa).

To M.thermoautotrophicum MTH765.

This is an uncharacterized protein from Methanocaldococcus jannaschii (strain ATCC 43067 / DSM 2661 / JAL-1 / JCM 10045 / NBRC 100440) (Methanococcus jannaschii).